Consider the following 697-residue polypeptide: Elongation factor G (697 aa).

One can recognise a tr-type G domain in the interval 8–283 (ERCRNIGIMA…AVVDYLPSPL (276 aa)). GTP-binding positions include 17–24 (AHIDAGKT), 81–85 (DTPGH), and 135–138 (NKID).

This sequence belongs to the TRAFAC class translation factor GTPase superfamily. Classic translation factor GTPase family. EF-G/EF-2 subfamily.

The protein resides in the cytoplasm. Catalyzes the GTP-dependent ribosomal translocation step during translation elongation. During this step, the ribosome changes from the pre-translocational (PRE) to the post-translocational (POST) state as the newly formed A-site-bound peptidyl-tRNA and P-site-bound deacylated tRNA move to the P and E sites, respectively. Catalyzes the coordinated movement of the two tRNA molecules, the mRNA and conformational changes in the ribosome. The protein is Elongation factor G of Koribacter versatilis (strain Ellin345).